We begin with the raw amino-acid sequence, 351 residues long: Leukotriene B4 receptor 1 (351 aa).

Topologically, residues 1-21 (MAANTTSTAATSSPGGMSLSL) are extracellular. A glycan (N-linked (GlcNAc...) asparagine) is linked at asparagine 4. The helical transmembrane segment at 22-44 (LPIVLLSVALVVGLPGNSFVVWS) threads the bilayer. Topologically, residues 45–56 (ILKRMQKRSVTA) are cytoplasmic. A helical transmembrane segment spans residues 57–77 (LLVLNLALADLAVLLTAPFFL). The Extracellular portion of the chain corresponds to 78 to 93 (HFLARGTWSFEVTGCR). A helical transmembrane segment spans residues 94–115 (LCHYVCGVSMYASVLLITIMSL). The Cytoplasmic portion of the chain corresponds to 116 to 140 (DRSLAVARPFVSQKVRTKAFARWVL). The helical transmembrane segment at 141-161 (AGIWVVSFLLAIPVLVYRTVT) threads the bilayer. At 162-179 (PKNKTLICDSRYPSDGHK) the chain is on the extracellular side. Asparagine 164 carries N-linked (GlcNAc...) asparagine glycosylation. Residues 180 to 200 (VFHLLFEAITGFLLPFLAVVA) traverse the membrane as a helical segment. The Cytoplasmic segment spans residues 201–222 (SYSDIGRRLQARRFRRSRRTGR). Residues 223–243 (LVVLIILAFAAFWLPYHLVNL) traverse the membrane as a helical segment. Topologically, residues 244–268 (VEAGRTLAGWDKNSPAGQRLKLARY) are extracellular. Residues 269 to 289 (VLIALAFLSSSVNPVLYACAG) traverse the membrane as a helical segment. The Cytoplasmic segment spans residues 290–351 (GGLLRSAGVG…TSSTPPESSK (62 aa)). Composition is skewed to polar residues over residues 311-327 (EVSSTRRGGTLVQTPKA) and 339-351 (SFMTSSTPPESSK). Positions 311-351 (EVSSTRRGGTLVQTPKATPTCPEPGPTDSFMTSSTPPESSK) are disordered.

Belongs to the G-protein coupled receptor 1 family. Phosphorylated by GRK6 upon leukotriene B4 binding; which promotes desensitization. As to expression, exclusively expressed in polymorphonuclear leukocytes.

The protein localises to the cell membrane. Functionally, receptor for leukotriene B4, a potent chemoattractant involved in inflammation and immune response. This Rattus norvegicus (Rat) protein is Leukotriene B4 receptor 1 (Ltb4r).